The sequence spans 617 residues: tRNA 5-methylaminomethyl-2-thiouridine biosynthesis bifunctional protein MnmC (617 aa).

The tRNA (mnm(5)s(2)U34)-methyltransferase stretch occupies residues 1-226 (MLDWQNGQLY…KREMLQGDLP (226 aa)). The segment at 241–617 (IGGGIAGCAA…SPAIPVSIKG (377 aa)) is FAD-dependent cmnm(5)s(2)U34 oxidoreductase.

The protein in the N-terminal section; belongs to the methyltransferase superfamily. tRNA (mnm(5)s(2)U34)-methyltransferase family. In the C-terminal section; belongs to the DAO family. FAD is required as a cofactor.

The protein localises to the cytoplasm. The catalysed reaction is 5-aminomethyl-2-thiouridine(34) in tRNA + S-adenosyl-L-methionine = 5-methylaminomethyl-2-thiouridine(34) in tRNA + S-adenosyl-L-homocysteine + H(+). Functionally, catalyzes the last two steps in the biosynthesis of 5-methylaminomethyl-2-thiouridine (mnm(5)s(2)U) at the wobble position (U34) in tRNA. Catalyzes the FAD-dependent demodification of cmnm(5)s(2)U34 to nm(5)s(2)U34, followed by the transfer of a methyl group from S-adenosyl-L-methionine to nm(5)s(2)U34, to form mnm(5)s(2)U34. The chain is tRNA 5-methylaminomethyl-2-thiouridine biosynthesis bifunctional protein MnmC from Nitrosospira multiformis (strain ATCC 25196 / NCIMB 11849 / C 71).